Here is a 378-residue protein sequence, read N- to C-terminus: Putative F-box/kelch-repeat protein At3g43710 (378 aa).

Positions 23 to 69 (TFGIEMLPDDLVLSCLARVPRMYYPILSLVSKRFRSFLTSTELYQTR) constitute an F-box domain. 3 Kelch repeats span residues 130 to 176 (NIYV…VLDG), 178 to 227 (IYVA…GYDG), and 262 to 308 (SQCV…VPTK).

The protein is Putative F-box/kelch-repeat protein At3g43710 of Arabidopsis thaliana (Mouse-ear cress).